A 262-amino-acid chain; its full sequence is Ribosomal RNA small subunit methyltransferase A (262 aa).

S-adenosyl-L-methionine contacts are provided by histidine 19, leucine 21, glycine 44, glutamate 65, aspartate 90, and asparagine 109. Residues 218–246 (LPNNLPGPLRERAEEALAGLGHGPDARAE) are disordered.

Belongs to the class I-like SAM-binding methyltransferase superfamily. rRNA adenine N(6)-methyltransferase family. RsmA subfamily.

The protein localises to the cytoplasm. It catalyses the reaction adenosine(1518)/adenosine(1519) in 16S rRNA + 4 S-adenosyl-L-methionine = N(6)-dimethyladenosine(1518)/N(6)-dimethyladenosine(1519) in 16S rRNA + 4 S-adenosyl-L-homocysteine + 4 H(+). Specifically dimethylates two adjacent adenosines (A1518 and A1519) in the loop of a conserved hairpin near the 3'-end of 16S rRNA in the 30S particle. May play a critical role in biogenesis of 30S subunits. The chain is Ribosomal RNA small subunit methyltransferase A from Rubrobacter xylanophilus (strain DSM 9941 / JCM 11954 / NBRC 16129 / PRD-1).